The chain runs to 254 residues: Claudin-16 (254 aa).

Residues 1-22 (MGPGLAASHVSFPDSLLAKMRD) are Cytoplasmic-facing. A helical membrane pass occupies residues 23-43 (LLQYVACFFAFFSAGFLVVAT). Over 44–98 (WTDCWMVNADDSLEVSTKCRGLWWECVTNAFDGIRTCDEYDSILAEHSLKLVVTR) the chain is Extracellular. Residues 99–119 (ALMITADILAGFGFITLLLGL) traverse the membrane as a helical segment. Topologically, residues 120–134 (DCVKFLPDEPYIKVR) are cytoplasmic. A helical transmembrane segment spans residues 135-155 (ISFVAGTTLLIAGAPGIIGSV). The Extracellular portion of the chain corresponds to 156–188 (WYAVDVYVERSSLVLHNIFLGIQYKFGWSCWLG). A helical membrane pass occupies residues 189–209 (MAGSLGCFLAGAILTCCLYLF). Over 210 to 254 (KDVGPERSYPYSTRKAYSTTAVSMPRSHAIPRTQTAKMYAVDTRV) the chain is Cytoplasmic. The Interaction with TJP1 signature appears at 252-254 (TRV).

The protein belongs to the claudin family. In terms of assembly, can form heteropolymeric tight junction strands with other claudins. Interacts with CLDN19. Interacts (via PDZ-binding motif TRV) with TJP1 (via PDZ domain). Cannot form tight junction strands on its own. In terms of tissue distribution, expressed preferentially in kidney.

It localises to the cell junction. Its subcellular location is the tight junction. The protein localises to the cell membrane. The catalysed reaction is Mg(2+)(in) = Mg(2+)(out). It catalyses the reaction Ca(2+)(in) = Ca(2+)(out). The enzyme catalyses Na(+)(in) = Na(+)(out). It carries out the reaction K(+)(in) = K(+)(out). The catalysed reaction is Rb(+)(in) = Rb(+)(out). It catalyses the reaction Cs(+)(in) = Cs(+)(out). The enzyme catalyses Li(+)(in) = Li(+)(out). Functionally, forms paracellular channels: coassembles with CLDN19 into tight junction strands with cation-selective channels through the strands, conveying epithelial permeability in a process known as paracellular tight junction permeability. Involved in the maintenance of ion gradients along the nephron. In the thick ascending limb (TAL) of Henle's loop, facilitates sodium paracellular permeability from the interstitial compartment to the lumen, contributing to the lumen-positive transepithelial potential that drives paracellular magnesium and calcium reabsorption. In Bos taurus (Bovine), this protein is Claudin-16 (CLDN16).